The sequence spans 347 residues: NADH-ubiquinone oxidoreductase chain 2 (347 aa).

The next 11 membrane-spanning stretches (helical) occupy residues 1 to 21 (MNPLVTLIIYITLISGTIITM), 25 to 45 (HWLTVWMGLEMNMFAIIPLIM), 59 to 79 (YFLIQASASMLLLMAATINFM), 96 to 116 (TIILAAIMMKLGMAPFHFWVP), 123 to 143 (LLSTSLIILTWQKLAPLSILY), 153 to 173 (IILASAMLSIMIGGWGGLNQT), 178 to 198 (IMAYSSIAHMGWMSAILIYNP), 200 to 220 (LMLLNLTLYIIFTITMFTILI), 239 to 259 (ILMMTLLLTLLSMGGLPPLSG), 278 to 298 (ISLTMAMLALLNLYFYMRLIY), and 325 to 345 (FLPTLTIISILMLPITPMMFI).

Belongs to the complex I subunit 2 family. Core subunit of respiratory chain NADH dehydrogenase (Complex I) which is composed of 45 different subunits. Interacts with TMEM242.

It is found in the mitochondrion inner membrane. It catalyses the reaction a ubiquinone + NADH + 5 H(+)(in) = a ubiquinol + NAD(+) + 4 H(+)(out). Core subunit of the mitochondrial membrane respiratory chain NADH dehydrogenase (Complex I) that is believed to belong to the minimal assembly required for catalysis. Complex I functions in the transfer of electrons from NADH to the respiratory chain. The immediate electron acceptor for the enzyme is believed to be ubiquinone. This is NADH-ubiquinone oxidoreductase chain 2 from Oryzorictes hova (Hova rice tenrec).